The chain runs to 416 residues: Serine hydroxymethyltransferase (416 aa).

Residues Leu118 and 122–124 each bind (6S)-5,6,7,8-tetrahydrofolate; that span reads GHL. Lys226 is subject to N6-(pyridoxal phosphate)lysine. (6S)-5,6,7,8-tetrahydrofolate contacts are provided by residues Glu242 and 350–352; that span reads SPF.

Belongs to the SHMT family. Homodimer. The cofactor is pyridoxal 5'-phosphate.

Its subcellular location is the cytoplasm. It catalyses the reaction (6R)-5,10-methylene-5,6,7,8-tetrahydrofolate + glycine + H2O = (6S)-5,6,7,8-tetrahydrofolate + L-serine. It functions in the pathway one-carbon metabolism; tetrahydrofolate interconversion. It participates in amino-acid biosynthesis; glycine biosynthesis; glycine from L-serine: step 1/1. Functionally, catalyzes the reversible interconversion of serine and glycine with tetrahydrofolate (THF) serving as the one-carbon carrier. This reaction serves as the major source of one-carbon groups required for the biosynthesis of purines, thymidylate, methionine, and other important biomolecules. Also exhibits THF-independent aldolase activity toward beta-hydroxyamino acids, producing glycine and aldehydes, via a retro-aldol mechanism. This is Serine hydroxymethyltransferase from Helicobacter acinonychis (strain Sheeba).